We begin with the raw amino-acid sequence, 119 residues long: Large ribosomal subunit protein uL22 (119 aa).

The protein belongs to the universal ribosomal protein uL22 family. Part of the 50S ribosomal subunit.

In terms of biological role, this protein binds specifically to 23S rRNA; its binding is stimulated by other ribosomal proteins, e.g. L4, L17, and L20. It is important during the early stages of 50S assembly. It makes multiple contacts with different domains of the 23S rRNA in the assembled 50S subunit and ribosome. The globular domain of the protein is located near the polypeptide exit tunnel on the outside of the subunit, while an extended beta-hairpin is found that lines the wall of the exit tunnel in the center of the 70S ribosome. The chain is Large ribosomal subunit protein uL22 from Chlorobium phaeobacteroides (strain DSM 266 / SMG 266 / 2430).